Here is a 579-residue protein sequence, read N- to C-terminus: Adenine/guanine permease AZG1 (579 aa).

The next 12 helical transmembrane spans lie at alanine 52–serine 72, leucine 131–asparagine 151, threonine 183–phenylalanine 203, alanine 221–valine 241, isoleucine 260–serine 280, methionine 292–valine 312, isoleucine 320–phenylalanine 340, phenylalanine 379–tyrosine 399, phenylalanine 414–leucine 434, alanine 459–isoleucine 479, proline 480–threonine 500, and phenylalanine 514–isoleucine 534.

The protein belongs to the nucleobase:cation symporter-2 (NCS2) (TC 2.A.40) family. Azg-like subfamily.

It localises to the membrane. Transports natural purines (adenine and guanine) as well as purine analogs. Confers sensitivity to 8-azaadenine and 8-azaguanine (8-azg). In Arabidopsis thaliana (Mouse-ear cress), this protein is Adenine/guanine permease AZG1 (AZG1).